Consider the following 155-residue polypeptide: Mediator of RNA polymerase II transcription subunit 10 (155 aa).

The disordered stretch occupies residues 54 to 80 (SSHTQSHAPDADTAQANPSDPPISTIE).

This sequence belongs to the Mediator complex subunit 10 family. As to quaternary structure, component of the Mediator complex.

Its subcellular location is the nucleus. Its function is as follows. Component of the Mediator complex, a coactivator involved in the regulated transcription of nearly all RNA polymerase II-dependent genes. Mediator functions as a bridge to convey information from gene-specific regulatory proteins to the basal RNA polymerase II transcription machinery. Mediator is recruited to promoters by direct interactions with regulatory proteins and serves as a scaffold for the assembly of a functional preinitiation complex with RNA polymerase II and the general transcription factors. The chain is Mediator of RNA polymerase II transcription subunit 10 (nut2) from Aspergillus terreus (strain NIH 2624 / FGSC A1156).